The chain runs to 114 residues: U17-barytoxin-Tl1d (114 aa).

The first 20 residues, 1-20, serve as a signal peptide directing secretion; sequence MKTIIVFLSLLVLATKFGDA. A propeptide spanning residues 21-74 is cleaved from the precursor; that stretch reads NEGVNQEQMKEVIQNEFREDFLNEMAPMSLLQQLEAIESTLLEKEADRNSRQKR. Disulfide bonds link C75/C88, C82/C93, and C87/C108.

This sequence belongs to the neurotoxin 14 (magi-1) family. 03 (ICK-30-40) subfamily. As to expression, expressed by the venom gland.

The protein localises to the secreted. Its function is as follows. Ion channel inhibitor. The protein is U17-barytoxin-Tl1d of Trittame loki (Brush-footed trapdoor spider).